A 101-amino-acid polypeptide reads, in one-letter code: Small ribosomal subunit protein uS14A (101 aa).

Residues 32–71 (RRPGTPEPERNRAVEELRRQPRDASATRVRNRDSVDGRPR) are disordered. Basic and acidic residues-rich tracts occupy residues 38–53 (EPER…RQPR) and 61–70 (RNRDSVDGRP).

Belongs to the universal ribosomal protein uS14 family. In terms of assembly, part of the 30S ribosomal subunit. Contacts proteins S3 and S10.

Functionally, binds 16S rRNA, required for the assembly of 30S particles and may also be responsible for determining the conformation of the 16S rRNA at the A site. In Streptomyces griseus subsp. griseus (strain JCM 4626 / CBS 651.72 / NBRC 13350 / KCC S-0626 / ISP 5235), this protein is Small ribosomal subunit protein uS14A.